The chain runs to 31 residues: Cytochrome b6-f complex subunit 6 (31 aa).

The helical transmembrane segment at 4–24 (LTSYFGFLLAALTITSVLFIG) threads the bilayer.

It belongs to the PetL family. As to quaternary structure, the 4 large subunits of the cytochrome b6-f complex are cytochrome b6, subunit IV (17 kDa polypeptide, PetD), cytochrome f and the Rieske protein, while the 4 small subunits are PetG, PetL, PetM and PetN. The complex functions as a dimer.

Its subcellular location is the plastid. The protein localises to the chloroplast thylakoid membrane. Its function is as follows. Component of the cytochrome b6-f complex, which mediates electron transfer between photosystem II (PSII) and photosystem I (PSI), cyclic electron flow around PSI, and state transitions. PetL is important for photoautotrophic growth as well as for electron transfer efficiency and stability of the cytochrome b6-f complex. The sequence is that of Cytochrome b6-f complex subunit 6 from Silene conica (Striped corn catchfly).